A 469-amino-acid chain; its full sequence is Pancreatic lipase-related protein 2 (469 aa).

Residues 1–17 form the signal peptide; that stretch reads MLPSWTIGLLLLATVRG. A disulfide bridge connects residues C21 and C27. N71 is a glycosylation site (N-linked (GlcNAc...) asparagine). The tract at residues 93–105 is required for galactolipase activity; sequence IHGFIDDGDSGWP. Residues C109 and C120 are joined by a disulfide bond. The Nucleophile role is filled by S171. The active-site Charge relay system is D195. Positions 206, 209, 211, and 214 each coordinate Ca(2+). C256 and C280 are joined by a disulfide. Residues 257–279 are required for galactolipase activity; sequence QKNILSTIIDINGIWQGIQDFVA. H282 acts as the Charge relay system in catalysis. Disulfide bonds link C304–C315 and C318–C323. N-linked (GlcNAc...) asparagine glycosylation is found at N353, N399, and N455. One can recognise a PLAT domain in the interval 357 to 469; the sequence is WRYRVSVTLA…ENALQTLYPC (113 aa). C453 and C469 are oxidised to a cystine.

Belongs to the AB hydrolase superfamily. Lipase family.

The protein resides in the secreted. Its subcellular location is the zymogen granule membrane. It is found in the cell projection. The protein localises to the neuron projection. The enzyme catalyses a triacylglycerol + H2O = a diacylglycerol + a fatty acid + H(+). It carries out the reaction a 1,2-diacyl-3-O-(beta-D-galactosyl)-sn-glycerol + 2 H2O = 3-beta-D-galactosyl-sn-glycerol + 2 a fatty acid + 2 H(+). The catalysed reaction is 1,2,3-tri-(9Z-octadecenoyl)-glycerol + H2O = di-(9Z)-octadecenoylglycerol + (9Z)-octadecenoate + H(+). It catalyses the reaction di-(9Z)-octadecenoylglycerol + H2O = (9Z-octadecenoyl)-glycerol + (9Z)-octadecenoate + H(+). The enzyme catalyses (9Z-octadecenoyl)-glycerol + H2O = glycerol + (9Z)-octadecenoate + H(+). It carries out the reaction 1-(9Z-octadecenoyl)-glycerol + H2O = glycerol + (9Z)-octadecenoate + H(+). The catalysed reaction is 1,2,3-tripropanoylglycerol + H2O = dipropanoylglycerol + propanoate + H(+). It catalyses the reaction 1,2,3-tributanoylglycerol + H2O = dibutanoylglycerol + butanoate + H(+). The enzyme catalyses 1,2,3-trioctanoylglycerol + H2O = dioctanoylglycerol + octanoate + H(+). It carries out the reaction 1,2-didecanoylglycerol + H2O = decanoylglycerol + decanoate + H(+). The catalysed reaction is long chain 1,2-diacyl-3-O-beta-D-galactosyl-sn-glycerol + H2O = long chain acyl-3-O-beta-D-galactosyl-sn-glycerol + a fatty acid + H(+). It catalyses the reaction 1,2-dioctanoyl-3-O-beta-D-galactosyl-sn-glycerol + H2O = octanoyl-3-(beta-D-galactosyl)-sn-glycerol + octanoate + H(+). The enzyme catalyses 1,2-didodecanoyl-3-beta-D-galactosyl-sn-glycerol + H2O = dodecanoyl-3-beta-D-galactosyl-sn-glycerol + dodecanoate + H(+). It carries out the reaction 1-beta-D-galactosyl-2,3-didodecanoyl-sn-glycerol + H2O = 1-beta-D-galactosyl-dodecanoyl-sn-glycerol + dodecanoate + H(+). The catalysed reaction is a 1,2-diacyl-3-O-[alpha-D-galactosyl-(1-&gt;6)-beta-D-galactosyl]-sn-glycerol + H2O = acyl-3-O-[alpha-D-galactosyl-(1-&gt;6)-beta-D-galactosyl]-sn-glycerol + a fatty acid + H(+). It catalyses the reaction long chain 1,2-diacyl-3-O-[alpha-D-galactosyl-(1-&gt;6)-beta-D-galactosyl]-sn-glycerol + H2O = long chain acyl-3-O-[alpha-D-galactosyl-(1-&gt;6)-beta-D-galactosyl]-sn-glycerol + a fatty acid + H(+). The enzyme catalyses 1,2-dioctanoyl-3-O-[alpha-D-galactosyl-(1-&gt;6)-beta-D-galactosyl]-sn-glycerol + H2O = octanoyl-3-O-[alpha-D-galactosyl-(1-&gt;6)-beta-D-galactosyl]-sn-glycerol + octanoate + H(+). It carries out the reaction 1,2-didodecanoyl-3-O-[alpha-D-galactosyl-(1-&gt;6)-beta-D-galactosyl]-sn-glycerol + H2O = dodecanoyl-3-O-[alpha-D-galactosyl-(1-&gt;6)-beta-D-galactosyl]-sn-glycerol + dodecanoate + H(+). The catalysed reaction is a 1,2-diacyl-sn-glycero-3-phosphocholine + H2O = a monoacyl-sn-glycero-3-phosphocholine + a fatty acid + H(+). The protein operates within glycerolipid metabolism; triacylglycerol degradation. Its pathway is glycolipid metabolism. Its function is as follows. Lipase that primarily hydrolyzes triglycerides and galactosylglycerides. In neonates, may play a major role in pancreatic digestion of dietary fats such as milk fat globules enriched in long-chain triglycerides. Hydrolyzes short-, medium- and long-chain fatty acyls in triglycerides without apparent positional specificity. Can completely deacylate triacylglycerols. When the liver matures and bile salt synthesis increases, likely functions mainly as a galactolipase and monoacylglycerol lipase. Hydrolyzes monogalactosyldiglycerols (MGDG) and digalactosyldiacylglycerols (DGDG) present in a plant-based diet, releasing long-chain polyunsaturated fatty acids. Hydrolyzes medium- and long-chain fatty acyls in galactolipids. May act together with LIPF to hydrolyze partially digested triglycerides. Hydrolyzes long-chain monoglycerides with high efficiency. In cytotoxic T cells, contributes to perforin-dependent cell lysis, but is unlikely to mediate direct cytotoxicity. Also has low phospholipase activity. In neurons, required for the localization of the phospholipid 1-oleoyl-2-palmitoyl-PC (OPPC) to neurite tips through acyl chain remodeling of membrane phospholipids. The resulting OPPC-rich lipid membrane domain recruits the t-SNARE protein STX4 by selectively interacting with the STX4 transmembrane domain and this promotes surface expression of the dopamine transporter SLC6A3/DAT at neurite tips by facilitating fusion of SLC6A3-containing transport vesicles with the plasma membrane. In Bos taurus (Bovine), this protein is Pancreatic lipase-related protein 2.